The following is a 697-amino-acid chain: Serine/threonine-protein kinase tousled-like 2 (697 aa).

Disordered stretches follow at residues 25–159 (VAKG…SQSE) and 288–316 (KLLIKKKPPSASQTPPPNLEPNKRKSKSN). Polar residues predominate over residues 31-44 (HNESSNQSLCSVGS). Residues 46–61 (SDKELETPEKKSNDQR) are compositionally biased toward basic and acidic residues. Over residues 109-145 (SSPQHSLSNPPAAVQQGSPSSISSVNTDHSHTSTSHK) the composition is skewed to polar residues. Coiled-coil stretches lie at residues 265 to 294 (AFQNLVKQQERVNGQREEIERQRKLLIKKK) and 336 to 373 (KLRLGHLKKEEAEIQVELERLERVRNLHIRELKRIHNE). Residues 388 to 666 (YLLLHLLGRG…VHQLASDPYL (279 aa)) enclose the Protein kinase domain. ATP contacts are provided by residues 394–402 (LGRGGFSEV) and K417. Catalysis depends on D518, which acts as the Proton acceptor.

The protein belongs to the protein kinase superfamily. Ser/Thr protein kinase family. In terms of assembly, monomer. May form homodimers; homodimerization may enhance autophosphoylation and enzymatic activity. Heterodimer with TLK1. Requires Mg(2+) as cofactor. In terms of processing, phosphorylated. Autophosphorylated; phosphorylation promotes the assembly of higher order oligomers and enzymatic activity.

The protein localises to the nucleus. Its subcellular location is the nucleoplasm. It localises to the cytoplasm. The protein resides in the perinuclear region. It is found in the cytoskeleton. The enzyme catalyses L-seryl-[protein] + ATP = O-phospho-L-seryl-[protein] + ADP + H(+). The catalysed reaction is L-threonyl-[protein] + ATP = O-phospho-L-threonyl-[protein] + ADP + H(+). Its function is as follows. Serine/threonine-protein kinase involved in the process of chromatin assembly and probably also DNA replication, transcription, repair, and chromosome segregation. Negative regulator of amino acid starvation-induced autophagy. The chain is Serine/threonine-protein kinase tousled-like 2 from Danio rerio (Zebrafish).